The sequence spans 297 residues: HTH-type transcriptional regulator ArgP (297 aa).

Residues 4-60 (PDYRTLQALDAVIRERGFERAAQKLCITQSAVSQRIKQLENMFGQPLLVRTVPPRPT) form the HTH lysR-type domain. Residues 21 to 40 (FERAAQKLCITQSAVSQRIK) constitute a DNA-binding region (H-T-H motif).

The protein belongs to the LysR transcriptional regulatory family. In terms of assembly, homodimer.

Controls the transcription of genes involved in arginine and lysine metabolism. This is HTH-type transcriptional regulator ArgP from Klebsiella pneumoniae (strain 342).